We begin with the raw amino-acid sequence, 513 residues long: Sodium/potassium/calcium exchanger 5 (513 aa).

The N-terminal stretch at 1–35 is a signal peptide; sequence MRTDVFLQRRKRRDVLLSIIALLLLIFAIVHLVFC. Topologically, residues 36–78 are extracellular; sequence AGLSFQGSSSARVRRDLENASECVQPQSSEFPEGFFTVQERKD. A helical transmembrane segment spans residues 79-99; it reads GGILIYFMIIFYMLLSVSIVC. The Cytoplasmic segment spans residues 100–123; that stretch reads DEYFLPSLEVISERLGLSQDVAGA. The helical transmembrane segment at 124–144 threads the bilayer; the sequence is TFMAAGSSAPELVTAFLGVFV. Residues 145-148 lie on the Extracellular side of the membrane; that stretch reads TKGD. A helical membrane pass occupies residues 149 to 169; the sequence is IGVSTIMGSAVYNLLCICAAC. The Cytoplasmic segment spans residues 170–181; that stretch reads GLLSSAVGRLSC. Residues 182–202 traverse the membrane as a helical segment; that stretch reads WPLFRDCVAYAISVAAVIAII. The Extracellular portion of the chain corresponds to 203 to 207; the sequence is SDNRV. The helical transmembrane segment at 208–228 threads the bilayer; it reads YWYDGACLLLVYGVYVAVLCF. Residues 229-315 lie on the Cytoplasmic side of the membrane; the sequence is DLRISEYVMQ…KSVFSMPDHD (87 aa). A helical transmembrane segment spans residues 316–336; it reads LKRILWVLSLPVSTLLFVSVP. At 337–350 the chain is on the extracellular side; sequence DCRRPFWKNFYMLT. Residues 351-371 traverse the membrane as a helical segment; sequence FLMSAVWISAFTYVLVWMVTI. Residues 372–381 lie on the Cytoplasmic side of the membrane; that stretch reads VGETLGIPDT. A helical transmembrane segment spans residues 382–402; the sequence is VMGMTLLAAGTSIPDTVASVM. At 403–420 the chain is on the extracellular side; that stretch reads VAREGKSDMAMSNIVGSN. A helical membrane pass occupies residues 421–441; that stretch reads VFDMLCLGLPWFIQTVFVDVG. The Cytoplasmic portion of the chain corresponds to 442–450; that stretch reads SPVEVNSSG. The chain crosses the membrane as a helical span at residues 451–471; that stretch reads LVFMSCTLLLSIIFLFLAVHI. Topologically, residues 472–482 are extracellular; the sequence is NGWKLDWKLGL. A helical transmembrane segment spans residues 483–503; the sequence is VCLACYILFATLSILYELGII. Residues 504–513 lie on the Cytoplasmic side of the membrane; the sequence is GNNPIRSCSD.

It belongs to the Ca(2+):cation antiporter (CaCA) (TC 2.A.19) family. SLC24A subfamily. In terms of tissue distribution, highly expressed in melanin-producing cells. Colocalizes with melanin biosynthesis marker dct.

It is found in the golgi apparatus. Its subcellular location is the trans-Golgi network membrane. The protein resides in the melanosome. The catalysed reaction is Ca(2+)(out) + K(+)(out) + 4 Na(+)(in) = Ca(2+)(in) + K(+)(in) + 4 Na(+)(out). Functionally, calcium, potassium:sodium antiporter that transports 1 Ca(2+) and 1 K(+) to the melanosome in exchange for 4 cytoplasmic Na(+). Involved in pigmentation, possibly by participating in ion transport in melanosomes. Predominant sodium-calcium exchanger in melanocytes. This chain is Sodium/potassium/calcium exchanger 5 (slc24a5), found in Danio rerio (Zebrafish).